Reading from the N-terminus, the 349-residue chain is Protein MULTIPLE CHLOROPLAST DIVISION SITE 1 (349 aa).

The transit peptide at 1–52 (MASIDSLQFHSLCNLQSSIGRAKLQNPSSLVIFRRRPVNLNWVQFETKGSFV) directs the protein to the chloroplast. Topologically, residues 53-116 (CKAIGDSSTP…VVFLMKKCSV (64 aa)) are chloroplast intermembrane. A helical membrane pass occupies residues 117-139 (NSIWIGVCITATVLVAAIRAYVV). Topologically, residues 140 to 349 (RKSRDNQRAG…NSSSEETHKS (210 aa)) are stromal. A disordered region spans residues 315–349 (QRPYKFSAKLEGENIQKNSQENHTGNSSSEETHKS). Positions 329–343 (IQKNSQENHTGNSSS) are enriched in polar residues.

Interacts with MIND1. Interacts with ARC6 in the chloroplast stroma and binds to FtsZ2-1 in an ARC6-dependent manner.

The protein localises to the plastid. It is found in the chloroplast inner membrane. Required for chloroplast division. Together with MIND1 and ARC3, regulates FtsZ ring positioning in chloroplasts in an ARC6-dependent manner. Determines the site of chloroplast division in concert with MIND1. Not directly involved in ring formation, but required for MIND1 and MINE1 localization to regulate FtsZ ring formation during plastidial constriction. This Arabidopsis thaliana (Mouse-ear cress) protein is Protein MULTIPLE CHLOROPLAST DIVISION SITE 1.